We begin with the raw amino-acid sequence, 263 residues long: Dihydropteroate synthase type-3 (263 aa).

A Pterin-binding domain is found at 2-257; sequence SKIFGIVNIT…DVKSLSDALK (256 aa). Asparagine 9 contributes to the Mg(2+) binding site. 4-aminobenzoate is bound at residue serine 49. Positions 82, 101, and 172 each coordinate (7,8-dihydropterin-6-yl)methyl diphosphate. Positions 101 and 172 each coordinate 6-hydroxymethyl-7,8-dihydropterin. Phenylalanine 177 lines the 4-aminobenzoate pocket. Lysine 211 is a binding site for (7,8-dihydropterin-6-yl)methyl diphosphate. Residue lysine 211 participates in 6-hydroxymethyl-7,8-dihydropterin binding. Position 212 (serine 212) interacts with 4-aminobenzoate. (7,8-dihydropterin-6-yl)methyl diphosphate is bound at residue 245–247; the sequence is RTH.

The protein belongs to the DHPS family. It depends on Mg(2+) as a cofactor.

The catalysed reaction is (7,8-dihydropterin-6-yl)methyl diphosphate + 4-aminobenzoate = 7,8-dihydropteroate + diphosphate. It participates in cofactor biosynthesis; tetrahydrofolate biosynthesis; 7,8-dihydrofolate from 2-amino-4-hydroxy-6-hydroxymethyl-7,8-dihydropteridine diphosphate and 4-aminobenzoate: step 1/2. Its function is as follows. Catalyzes the condensation of para-aminobenzoate (pABA) with 6-hydroxymethyl-7,8-dihydropterin diphosphate (DHPt-PP) to form 7,8-dihydropteroate (H2Pte), the immediate precursor of folate derivatives. Confers resistance to sulfonamide antibiotics, including sulfamethoxazole (SMX), sulfadiazine and sulfisoxazole. This chain is Dihydropteroate synthase type-3, found in Escherichia coli.